The primary structure comprises 313 residues: Homoserine O-succinyltransferase (313 aa).

Cysteine 142 (acyl-thioester intermediate) is an active-site residue. Substrate contacts are provided by lysine 163 and serine 192. The Proton acceptor role is filled by histidine 235. The active site involves glutamate 237. A substrate-binding site is contributed by arginine 249.

It belongs to the MetA family.

Its subcellular location is the cytoplasm. The enzyme catalyses L-homoserine + succinyl-CoA = O-succinyl-L-homoserine + CoA. It functions in the pathway amino-acid biosynthesis; L-methionine biosynthesis via de novo pathway; O-succinyl-L-homoserine from L-homoserine: step 1/1. Transfers a succinyl group from succinyl-CoA to L-homoserine, forming succinyl-L-homoserine. The polypeptide is Homoserine O-succinyltransferase (Vibrio parahaemolyticus serotype O3:K6 (strain RIMD 2210633)).